The primary structure comprises 682 residues: Nephrocystin-1-like protein (682 aa).

Residues 10-100 (LQDAINRFPQ…ALSPEKEQLS (91 aa)) adopt a coiled-coil conformation. The tract at residues 96–188 (KEQLSFSVSV…PLESKTLNER (93 aa)) is disordered. Over residues 128–148 (NDDESEDSDNDSEIIETDVQL) the composition is skewed to acidic residues. Residues 215-275 (VRGNVFVAID…PKTYLQHVKE (61 aa)) form the SH3 domain.

This sequence belongs to the nephrocystin-1 family. In terms of tissue distribution, expressed in ciliated sensory neurons of the head (amphid neurons) and the tail in hermaphrodites (phasmid neurons) and males (sensory ray neurons).

In terms of biological role, plays a role in the extension of dendrites from phasmid ciliated sensory neurons. May be necessary for initial assembly of the cilium. The protein is Nephrocystin-1-like protein of Caenorhabditis elegans.